A 408-amino-acid chain; its full sequence is UDP-N-acetylglucosamine--dolichyl-phosphate N-acetylglucosaminephosphotransferase (408 aa).

The Lumenal portion of the chain corresponds to 1-10; it reads MWAFPELPMP. Residues 11–38 form a helical membrane-spanning segment; the sequence is LLVNLIGSLMGFVATVTLIPAFRGHFIA. Topologically, residues 39 to 58 are cytoplasmic; it reads ARLCGQDLNKSSREQIPESQ. Residues 44–46 and Glu56 each bind UDP-N-acetyl-alpha-D-glucosamine; that span reads QDL. The chain crosses the membrane as a helical span at residues 59-78; that stretch reads GVISGAVFLIILFCFIPFPF. The Lumenal segment spans residues 79 to 91; that stretch reads LNCFVEQQCKAFP. The helical transmembrane segment at 92-118 threads the bilayer; sequence HHEFVALIGALLAICCMIFLGFADDVL. Residues 119–121 are Cytoplasmic-facing; it reads NLR. A helical transmembrane segment spans residues 122–143; it reads WRHKLLLPTAASLPLLMVYFTN. Lys125 contributes to the dolichyl phosphate binding site. Topologically, residues 144-166 are lumenal; that stretch reads FGNTTIVVPKPLRPILGLHLDLG. Asn146 carries N-linked (GlcNAc...) asparagine glycosylation. A helical membrane pass occupies residues 167–186; that stretch reads ILYYVYMGLLAVFCTNAINI. 178 to 186 is a dolichyl phosphate binding site; that stretch reads VFCTNAINI. Asn185 lines the Mg(2+) pocket. The Cytoplasmic portion of the chain corresponds to 187-192; it reads LAGING. Asn191 provides a ligand contact to UDP-N-acetyl-alpha-D-glucosamine. Residues 193–213 traverse the membrane as a helical segment; the sequence is LEAGQSLVISASIIVFNLVEL. The Lumenal portion of the chain corresponds to 214 to 218; sequence DGDYR. Residues 219 to 242 traverse the membrane as a helical segment; the sequence is DDHIFSLYFMIPFFFTTLGLLYHN. Residues 243 to 250 lie on the Cytoplasmic side of the membrane; it reads WYPSRVFV. A helical membrane pass occupies residues 251 to 269; the sequence is GDTFCYFAGMTFAVVGILG. Residue Asp252 participates in Mg(2+) binding. Topologically, residues 270–271 are lumenal; that stretch reads HF. A helical transmembrane segment spans residues 272-293; the sequence is SKTMLLFFMPQVFNFLYSLPQL. The Cytoplasmic segment spans residues 294 to 375; the sequence is LHIIPCPRHR…LLLKVFGPMH (82 aa). 301–303 is a UDP-N-acetyl-alpha-D-glucosamine binding site; it reads RHR. A helical membrane pass occupies residues 376–400; it reads ERNLTLLLLLLQVVGSAVTFSIRYQ. The Lumenal segment spans residues 401–408; the sequence is LVRLFYDV.

This sequence belongs to the glycosyltransferase 4 family. In terms of assembly, homodimer. Mg(2+) is required as a cofactor.

The protein resides in the endoplasmic reticulum membrane. It catalyses the reaction a di-trans,poly-cis-dolichyl phosphate + UDP-N-acetyl-alpha-D-glucosamine = an N-acetyl-alpha-D-glucosaminyl-diphospho-di-trans,poly-cis-dolichol + UMP. The protein operates within protein modification; protein glycosylation. With respect to regulation, inhibited by natural nucleoside antibiotic tunicamycin, which acts as a structural analog and competitor of UDP-GlcNAc. Activated by Man-P-Dol. Activated by manganese. Inhibited by diumycin. Functionally, UDP-N-acetylglucosamine--dolichyl-phosphate N-acetylglucosaminephosphotransferase that operates in the biosynthetic pathway of dolichol-linked oligosaccharides, the glycan precursors employed in protein asparagine (N)-glycosylation. The assembly of dolichol-linked oligosaccharides begins on the cytosolic side of the endoplasmic reticulum membrane and finishes in its lumen. The sequential addition of sugars to dolichol pyrophosphate produces dolichol-linked oligosaccharides containing fourteen sugars, including two GlcNAcs, nine mannoses and three glucoses. Once assembled, the oligosaccharide is transferred from the lipid to nascent proteins by oligosaccharyltransferases. Catalyzes the initial step of dolichol-linked oligosaccharide biosynthesis, transfering GlcNAc-1-P from cytosolic UDP-GlcNAc onto the carrier lipid dolichyl phosphate (P-dolichol), yielding GlcNAc-P-P-dolichol embedded in the cytoplasmic leaflet of the endoplasmic reticulum membrane. The sequence is that of UDP-N-acetylglucosamine--dolichyl-phosphate N-acetylglucosaminephosphotransferase from Bos taurus (Bovine).